A 473-amino-acid chain; its full sequence is Glutamate--tRNA ligase (473 aa).

A 'HIGH' region motif is present at residues 9 to 19 (PSPTGELHLGS). A 'KMSKS' region motif is present at residues 237–241 (KLSKK). Residue lysine 240 coordinates ATP.

Belongs to the class-I aminoacyl-tRNA synthetase family. Glutamate--tRNA ligase type 1 subfamily. As to quaternary structure, monomer.

It localises to the cytoplasm. It catalyses the reaction tRNA(Glu) + L-glutamate + ATP = L-glutamyl-tRNA(Glu) + AMP + diphosphate. Functionally, catalyzes the attachment of glutamate to tRNA(Glu) in a two-step reaction: glutamate is first activated by ATP to form Glu-AMP and then transferred to the acceptor end of tRNA(Glu). The protein is Glutamate--tRNA ligase of Wigglesworthia glossinidia brevipalpis.